The following is a 396-amino-acid chain: Cellular tumor antigen p53 (396 aa).

The interval M1–F44 is transcription activation (acidic). The interval A63–S89 is disordered. Low complexity predominate over residues T77–S89. Residues D90 to Q281 mediate DNA binding. Zn(2+) contacts are provided by C164, H167, C227, and C231. Residues R262 to R269 are interaction with DNA. Positions K297–K317 match the Bipartite nuclear localization signal motif. The tract at residues K301–V322 is disordered. The oligomerization stretch occupies residues D325–V356. The Nuclear export signal motif lies at E339 to L350. Residues K369 to K392 form a basic (repression of DNA-binding) region.

This sequence belongs to the p53 family. As to quaternary structure, binds DNA as a homotetramer. It depends on Zn(2+) as a cofactor.

It is found in the cytoplasm. The protein localises to the nucleus. Functionally, multifunctional transcription factor that induces cell cycle arrest, DNA repair or apoptosis upon binding to its target DNA sequence. Acts as a tumor suppressor in many tumor types; induces growth arrest or apoptosis depending on the physiological circumstances and cell type. Negatively regulates cell division by controlling expression of a set of genes required for this process. One of the activated genes is an inhibitor of cyclin-dependent kinases. Apoptosis induction seems to be mediated either by stimulation of BAX and FAS antigen expression, or by repression of Bcl-2 expression. This is Cellular tumor antigen p53 (tp53) from Oncorhynchus mykiss (Rainbow trout).